The chain runs to 321 residues: Glucokinase (321 aa).

Residue 8–13 (GDVGGT) participates in ATP binding.

It belongs to the bacterial glucokinase family.

The protein localises to the cytoplasm. The enzyme catalyses D-glucose + ATP = D-glucose 6-phosphate + ADP + H(+). The protein is Glucokinase of Shigella boydii serotype 18 (strain CDC 3083-94 / BS512).